A 431-amino-acid chain; its full sequence is Enolase (431 aa).

Q166 contributes to the (2R)-2-phosphoglycerate binding site. E208 acts as the Proton donor in catalysis. Mg(2+) contacts are provided by D245, E288, and D315. (2R)-2-phosphoglycerate contacts are provided by K340, R369, S370, and K391. K340 serves as the catalytic Proton acceptor.

Belongs to the enolase family. Mg(2+) serves as cofactor.

The protein localises to the cytoplasm. It localises to the secreted. It is found in the cell surface. The catalysed reaction is (2R)-2-phosphoglycerate = phosphoenolpyruvate + H2O. The protein operates within carbohydrate degradation; glycolysis; pyruvate from D-glyceraldehyde 3-phosphate: step 4/5. In terms of biological role, catalyzes the reversible conversion of 2-phosphoglycerate (2-PG) into phosphoenolpyruvate (PEP). It is essential for the degradation of carbohydrates via glycolysis. This is Enolase from Clostridium botulinum (strain 657 / Type Ba4).